The following is a 429-amino-acid chain: Serine hydroxymethyltransferase (429 aa).

(6S)-5,6,7,8-tetrahydrofolate-binding positions include leucine 126 and 130–132; that span reads GHL. N6-(pyridoxal phosphate)lysine is present on lysine 235. (6S)-5,6,7,8-tetrahydrofolate is bound at residue 359 to 361; sequence SPF.

Belongs to the SHMT family. As to quaternary structure, homodimer. Pyridoxal 5'-phosphate is required as a cofactor.

It is found in the cytoplasm. The enzyme catalyses (6R)-5,10-methylene-5,6,7,8-tetrahydrofolate + glycine + H2O = (6S)-5,6,7,8-tetrahydrofolate + L-serine. The protein operates within one-carbon metabolism; tetrahydrofolate interconversion. It functions in the pathway amino-acid biosynthesis; glycine biosynthesis; glycine from L-serine: step 1/1. In terms of biological role, catalyzes the reversible interconversion of serine and glycine with tetrahydrofolate (THF) serving as the one-carbon carrier. This reaction serves as the major source of one-carbon groups required for the biosynthesis of purines, thymidylate, methionine, and other important biomolecules. Also exhibits THF-independent aldolase activity toward beta-hydroxyamino acids, producing glycine and aldehydes, via a retro-aldol mechanism. This Synechococcus sp. (strain CC9902) protein is Serine hydroxymethyltransferase.